The chain runs to 1055 residues: Pre-mRNA-splicing factor ATP-dependent RNA helicase-like protein cdc28 (1055 aa).

The segment covering 67–78 (PREGSRPKENYN) has biased composition (basic and acidic residues). Residues 67-184 (PREGSRPKEN…TERLNDLRER (118 aa)) form a disordered region. Over residues 112–121 (PLKKKSRSKT) the composition is skewed to basic residues. Basic and acidic residues predominate over residues 122 to 132 (PKREIARRQRD). Acidic residues predominate over residues 133–145 (EDEWESDEYEEVV). Residues 163–184 (QNHDYEKSSDPETERLNDLRER) show a composition bias toward basic and acidic residues. One can recognise a Helicase ATP-binding domain in the interval 428–592 (LKAINEYQVL…FDEAPVFYVP (165 aa)). 441–448 (AETGSGKT) lines the ATP pocket. The short motif at 539–542 (DEAH) is the DEAH box element. The region spanning 617–790 (TILQIHTTQP…NIVLLLKSLG (174 aa)) is the Helicase C-terminal domain.

The protein belongs to the DEAD box helicase family. DEAH subfamily. DDX16/PRP8 sub-subfamily.

It is found in the nucleus. The catalysed reaction is ATP + H2O = ADP + phosphate + H(+). Its function is as follows. Involved in pre-mRNA splicing. Is required together with ATP and at least one other factor, for the first cleavage-ligation reaction. Functions as a molecular motor in the activation of the precatalytic spliceosome for the first transesterification reaction of pre-mRNA splicing by hydrolyzing ATP to cause the activation of the spliceosome without the occurrence of splicing. The chain is Pre-mRNA-splicing factor ATP-dependent RNA helicase-like protein cdc28 (cdc28) from Schizosaccharomyces pombe (strain 972 / ATCC 24843) (Fission yeast).